Reading from the N-terminus, the 625-residue chain is Cytoskeleton-associated protein 2 (625 aa).

Composition is skewed to polar residues over residues 1-22 and 107-128; these read MSTPAIPQDLQLNPSQRTQSAF and NELTNSTLATDPPNSEDNNQTL. Disordered stretches follow at residues 1–27, 104–138, and 153–173; these read MSTPAIPQDLQLNPSQRTQSAFREQRR, KPSNELTNSTLATDPPNSEDNNQTLPLLPVKDDPQ, and NSKKKPVITEKPKHDANVPKK. The segment covering 159 to 170 has biased composition (basic and acidic residues); the sequence is VITEKPKHDANV. Ser190 carries the phosphoserine modification. 4 disordered regions span residues 195–237, 259–282, 322–398, and 484–521; these read LQVK…SHMT, SQHNKAQDAMKPGNSRMSANVTVQ, RPAS…QNEQ, and SGKLEMENNPPRNVFQDCEKEQDDKVKDPTSDVKTPST. Composition is skewed to basic and acidic residues over residues 359–373 and 500–514; these read ETAEERKARLSEWKA and DCEKEQDDKVKDPTS. Residues Thr518 and Thr521 each carry the phosphothreonine modification. Residue Ser534 is modified to Phosphoserine. Phosphothreonine occurs at positions 535 and 536. Tyr538 is subject to Phosphotyrosine. Ser541 is subject to Phosphoserine.

The protein belongs to the CKAP2 family. In terms of assembly, associates with alpha- and beta-tubulins.

The protein localises to the cytoplasm. Its subcellular location is the cytoskeleton. Its function is as follows. Possesses microtubule stabilizing properties. Involved in regulating aneuploidy, cell cycling, and cell death in a p53/TP53-dependent manner. The polypeptide is Cytoskeleton-associated protein 2 (CKAP2) (Bos taurus (Bovine)).